The following is a 357-amino-acid chain: Putative RING-H2 finger protein ATL37 (357 aa).

The N-terminal stretch at 1–31 (MTIFTRDFSHRILACVLLPLFLFQCLPYVTC) is a signal peptide. The chain crosses the membrane as a helical span at residues 47–67 (SSIIGIVLLSLFLLLLVVYCL). Residues 120 to 162 (CAICLCEFEDEEPLRWMPPCSHTFHANCIDEWLSSRSTCPVCR) form an RING-type; atypical zinc finger. The segment at 172 to 210 (SFPHPSMDVETGNAQRGVQESPDERSLTGSSVTCNNNAN) is disordered. Over residues 198 to 210 (LTGSSVTCNNNAN) the composition is skewed to polar residues. The residue at position 273 (Ser-273) is a Phosphoserine. 2 disordered regions span residues 281–304 (RSSRQGYRSGSVGNERTGFSQGRQ) and 327–357 (LDRDNLMRETSQANDKDFGERSFQRLMPEKN). A compositionally biased stretch (polar residues) spans 283-304 (SRQGYRSGSVGNERTGFSQGRQ). Residues 340–357 (NDKDFGERSFQRLMPEKN) show a composition bias toward basic and acidic residues.

This sequence belongs to the RING-type zinc finger family. ATL subfamily.

It is found in the membrane. The catalysed reaction is S-ubiquitinyl-[E2 ubiquitin-conjugating enzyme]-L-cysteine + [acceptor protein]-L-lysine = [E2 ubiquitin-conjugating enzyme]-L-cysteine + N(6)-ubiquitinyl-[acceptor protein]-L-lysine.. The protein operates within protein modification; protein ubiquitination. In Arabidopsis thaliana (Mouse-ear cress), this protein is Putative RING-H2 finger protein ATL37 (ATL37).